A 265-amino-acid polypeptide reads, in one-letter code: Uridylate kinase (265 aa).

The disordered stretch occupies residues methionine 1–serine 29. Lysine 40 to glycine 43 contacts ATP. A UMP-binding site is contributed by glycine 81. 2 residues coordinate ATP: glycine 82 and arginine 86. Residues aspartate 101 and methionine 162–threonine 169 contribute to the UMP site. ATP-binding residues include phenylalanine 195 and aspartate 198.

The protein belongs to the UMP kinase family. As to quaternary structure, homohexamer.

The protein localises to the cytoplasm. The catalysed reaction is UMP + ATP = UDP + ADP. The protein operates within pyrimidine metabolism; CTP biosynthesis via de novo pathway; UDP from UMP (UMPK route): step 1/1. Its activity is regulated as follows. Inhibited by UTP. Its function is as follows. Catalyzes the reversible phosphorylation of UMP to UDP. The protein is Uridylate kinase of Mycolicibacterium paratuberculosis (strain ATCC BAA-968 / K-10) (Mycobacterium paratuberculosis).